We begin with the raw amino-acid sequence, 181 residues long: Ribonuclease HII (181 aa).

The 181-residue stretch at 1-181 (MICGIDEVGR…SLHRKNFKLI (181 aa)) folds into the RNase H type-2 domain. A divalent metal cation contacts are provided by aspartate 6, glutamate 7, and aspartate 98.

The protein belongs to the RNase HII family. Requires Mn(2+) as cofactor. The cofactor is Mg(2+).

It localises to the cytoplasm. The enzyme catalyses Endonucleolytic cleavage to 5'-phosphomonoester.. In terms of biological role, endonuclease that specifically degrades the RNA of RNA-DNA hybrids. In Borreliella afzelii (strain PKo) (Borrelia afzelii), this protein is Ribonuclease HII.